Reading from the N-terminus, the 529-residue chain is Beta-hexosaminidase subunit alpha (529 aa).

A signal peptide spans 1–22 (MASSRLWFSLLLAAALAGRATA). Residues 23-88 (LWPWPQNIQT…PRPYLTGKRH (66 aa)) constitute a propeptide that is removed on maturation. C58 and C104 are joined by a disulfide. 3 N-linked (GlcNAc...) asparagine glycosylation sites follow: N115, N157, and N295. C277 and C328 are oxidised to a cystine. Residue E323 is the Proton donor of the active site. Residues 423-424 (NR) are critical for hydrolysis GM2 gangliosides. C505 and C522 are joined by a disulfide.

It belongs to the glycosyl hydrolase 20 family. In terms of assembly, there are 3 beta-hexosaminidase isozymes: isozyme A (hexosaminidase A) is a heterodimer composed of one subunit alpha and one subunit beta (chain A and B); isozyme B (hexosaminidase B) is a homodimer of two beta subunits (two chains A and B); isozyme S (hexosaminidase S) is a homodimer of two alpha subunits. The composition of the dimer (isozyme A versus isozyme S) has a significant effect on the substrate specificity of the alpha subunit active site.

It localises to the lysosome. The catalysed reaction is Hydrolysis of terminal non-reducing N-acetyl-D-hexosamine residues in N-acetyl-beta-D-hexosaminides.. It carries out the reaction N-acetyl-beta-D-galactosaminyl-(1-&gt;4)-beta-D-3-sulfogalactosyl-(1-&gt;4)-beta-D-glucosyl-(1&lt;-&gt;1')-ceramide + H2O = a beta-D-3-sulfogalactosyl-(1-&gt;4)-beta-D-glucosyl-(1&lt;-&gt;1')-ceramide + N-acetyl-beta-D-galactosamine. It catalyses the reaction a ganglioside GM2 (d18:1(4E)) + H2O = a ganglioside GM3 (d18:1(4E)) + N-acetyl-beta-D-galactosamine. The enzyme catalyses a ganglioside GM2 + H2O = a ganglioside GM3 + N-acetyl-beta-D-galactosamine. The catalysed reaction is beta-D-GalNAc-(1-&gt;4)-alpha-L-IdoA-(1-&gt;3)-beta-D-GalNAc-4-sulfate-(1-&gt;4)-alpha-L-IdoA-(1-&gt;3)-D-GalNAc-4-sulfate + H2O = alpha-L-IdoA-(1-&gt;3)-beta-D-GalNAc-4-sulfate-(1-&gt;4)-alpha-L-IdoA-(1-&gt;3)-D-GalNAc-4-sulfate + N-acetyl-D-galactosamine. It carries out the reaction N-acetyl-beta-D-6-sulfogalactosaminyl-(1-&gt;4)-alpha-L-iduronyl-(1-&gt;3)-N-acetyl-D-6-sulfogalactosamine + H2O = alpha-L-iduronyl-(1-&gt;3)-N-acetyl-D-6-sulfogalactosamine + N-acetyl-D-6-sulfogalactosamine. Addition of GM2A stimulates the hydrolysis of sulfated glycosphingolipid SM2 and the ganglioside GM2. In terms of biological role, hydrolyzes the non-reducing end N-acetyl-D-hexosamine and/or sulfated N-acetyl-D-hexosamine of glycoconjugates, such as the oligosaccharide moieties from proteins and neutral glycolipids, or from certain mucopolysaccharides. The isozyme S is as active as the isozyme A on the anionic bis-sulfated glycans, the chondroitin-6-sulfate trisaccharide (C6S-3), and the dermatan sulfate pentasaccharide, and the sulfated glycosphingolipid SM2. The isozyme B does not hydrolyze each of these substrates, however hydrolyzes efficiently neutral oligosaccharide. Only the isozyme A is responsible for the degradation of GM2 gangliosides in the presence of GM2A. In Pongo abelii (Sumatran orangutan), this protein is Beta-hexosaminidase subunit alpha.